The primary structure comprises 511 residues: Mediator of RNA polymerase II transcription subunit 17 (511 aa).

It belongs to the Mediator complex subunit 17 family. As to quaternary structure, component of the Mediator complex.

The protein localises to the nucleus. Functionally, component of the Mediator complex, a coactivator involved in the regulated transcription of nearly all RNA polymerase II-dependent genes. Mediator functions as a bridge to convey information from gene-specific regulatory proteins to the basal RNA polymerase II transcription machinery. Mediator is recruited to promoters by direct interactions with regulatory proteins and serves as a scaffold for the assembly of a functional preinitiation complex with RNA polymerase II and the general transcription factors. This is Mediator of RNA polymerase II transcription subunit 17 (SRB4) from Yarrowia lipolytica (strain CLIB 122 / E 150) (Yeast).